The chain runs to 350 residues: Autophagy-related protein 3 (350 aa).

Residues 85–166 (NFAGDAGLEE…EEDDEAIIRD (82 aa)) are flexible region. The segment at 97 to 171 (VDDGDEFKGS…AIIRDTDASG (75 aa)) is disordered. Over residues 102-113 (EFKGSKGDDDGW) the composition is skewed to basic and acidic residues. Acidic residues predominate over residues 146 to 161 (DDDDDIPDMEDEEDDE). The Glycyl thioester intermediate role is filled by C244. The tract at residues 248–326 (PVMKTLLDRA…DQEVAIRVDQ (79 aa)) is handle region. An N6-acetyllysine mark is found at K262 and K267.

It belongs to the ATG3 family. As to quaternary structure, monomer. Interacts with ATG8 through an intermediate thioester bond through the C-terminal Gly of ATG8. Also interacts with the 40 amino acid C-terminal region of the E1-like ATG7 enzyme. Also interacts with the ATG12-ATG5 conjugate. Interacts with HAT1. Post-translationally, acetylated by HAT1 at Lys-262 and Lys-267, which affects the interaction with ATG8 and prevents autophagy during both appressorium development and nutrient starvation.

The protein localises to the preautophagosomal structure. It localises to the cytoplasm. Functionally, E2 conjugating enzyme required for the cytoplasm to vacuole transport (Cvt) and autophagy. Required for selective autophagic degradation of the nucleus (nucleophagy) as well as for mitophagy which contributes to regulate mitochondrial quantity and quality by eliminating the mitochondria to a basal level to fulfill cellular energy requirements and preventing excess ROS production. Responsible for the E2-like covalent binding of phosphatidylethanolamine to the C-terminal Gly of ATG8. The ATG12-ATG5 conjugate plays a role of an E3 and promotes the transfer of ATG8 from ATG3 to phosphatidylethanolamine (PE). This step is required for the membrane association of ATG8. The formation of the ATG8-phosphatidylethanolamine conjugate is essential for autophagy and for the cytoplasm to vacuole transport (Cvt). The ATG8-PE conjugate mediates tethering between adjacent membranes and stimulates membrane hemifusion, leading to expansion of the autophagosomal membrane during autophagy. Plays a role in appressorium formation and pathogenicity. The chain is Autophagy-related protein 3 from Pyricularia oryzae (strain 70-15 / ATCC MYA-4617 / FGSC 8958) (Rice blast fungus).